The primary structure comprises 147 residues: Nucleoside diphosphate kinase (147 aa).

Positions 9, 57, 85, 91, 102, and 112 each coordinate ATP. His115 acts as the Pros-phosphohistidine intermediate in catalysis.

This sequence belongs to the NDK family. Homotetramer. It depends on Mg(2+) as a cofactor.

The protein resides in the cytoplasm. The enzyme catalyses a 2'-deoxyribonucleoside 5'-diphosphate + ATP = a 2'-deoxyribonucleoside 5'-triphosphate + ADP. It carries out the reaction a ribonucleoside 5'-diphosphate + ATP = a ribonucleoside 5'-triphosphate + ADP. In terms of biological role, major role in the synthesis of nucleoside triphosphates other than ATP. The ATP gamma phosphate is transferred to the NDP beta phosphate via a ping-pong mechanism, using a phosphorylated active-site intermediate. The polypeptide is Nucleoside diphosphate kinase (Thermosipho africanus (strain TCF52B)).